A 184-amino-acid polypeptide reads, in one-letter code: Oligoribonuclease (184 aa).

The 164-residue stretch at 8-171 folds into the Exonuclease domain; sequence LIWIDLEMTG…EDIRESVVEL (164 aa). The active site involves tyrosine 129.

Belongs to the oligoribonuclease family.

It localises to the cytoplasm. In terms of biological role, 3'-to-5' exoribonuclease specific for small oligoribonucleotides. The polypeptide is Oligoribonuclease (Buchnera aphidicola subsp. Acyrthosiphon pisum (strain APS) (Acyrthosiphon pisum symbiotic bacterium)).